The following is a 292-amino-acid chain: Probable serine/threonine-protein kinase FPV226 (292 aa).

In terms of domain architecture, Protein kinase spans 14–292 (WKIDKLIGCG…DLLRQLVNSL (279 aa)). ATP contacts are provided by residues 20–28 (IGCGGFGCV) and K43. The active-site Proton acceptor is the D147.

Belongs to the protein kinase superfamily. Ser/Thr protein kinase family. Poxviruses subfamily.

It catalyses the reaction L-seryl-[protein] + ATP = O-phospho-L-seryl-[protein] + ADP + H(+). It carries out the reaction L-threonyl-[protein] + ATP = O-phospho-L-threonyl-[protein] + ADP + H(+). This is Probable serine/threonine-protein kinase FPV226 from Vertebrata (FPV).